Reading from the N-terminus, the 365-residue chain is tRNA 2-selenouridine synthase (365 aa).

A Rhodanese domain is found at 12–136; it reads FLHDVPLLDV…LRMFLIDTTQ (125 aa). C95 serves as the catalytic S-selanylcysteine intermediate.

It belongs to the SelU family. As to quaternary structure, monomer.

It carries out the reaction 5-methylaminomethyl-2-thiouridine(34) in tRNA + selenophosphate + (2E)-geranyl diphosphate + H2O + H(+) = 5-methylaminomethyl-2-selenouridine(34) in tRNA + (2E)-thiogeraniol + phosphate + diphosphate. The enzyme catalyses 5-methylaminomethyl-2-thiouridine(34) in tRNA + (2E)-geranyl diphosphate = 5-methylaminomethyl-S-(2E)-geranyl-thiouridine(34) in tRNA + diphosphate. The catalysed reaction is 5-methylaminomethyl-S-(2E)-geranyl-thiouridine(34) in tRNA + selenophosphate + H(+) = 5-methylaminomethyl-2-(Se-phospho)selenouridine(34) in tRNA + (2E)-thiogeraniol. It catalyses the reaction 5-methylaminomethyl-2-(Se-phospho)selenouridine(34) in tRNA + H2O = 5-methylaminomethyl-2-selenouridine(34) in tRNA + phosphate. Functionally, involved in the post-transcriptional modification of the uridine at the wobble position (U34) of tRNA(Lys), tRNA(Glu) and tRNA(Gln). Catalyzes the conversion of 2-thiouridine (S2U-RNA) to 2-selenouridine (Se2U-RNA). Acts in a two-step process involving geranylation of 2-thiouridine (S2U) to S-geranyl-2-thiouridine (geS2U) and subsequent selenation of the latter derivative to 2-selenouridine (Se2U) in the tRNA chain. The sequence is that of tRNA 2-selenouridine synthase from Verminephrobacter eiseniae (strain EF01-2).